Here is a 189-residue protein sequence, read N- to C-terminus: Crossover junction endodeoxyribonuclease RuvC (189 aa).

Active-site residues include D9, E70, and D143. Residues D9, E70, and D143 each contribute to the Mg(2+) site. The span at 162-178 (MGAASGNSSLTPAQKAW) shows a compositional bias: low complexity. Residues 162–189 (MGAASGNSSLTPAQKAWADAEAKARRKR) are disordered. The segment covering 179–189 (ADAEAKARRKR) has biased composition (basic and acidic residues).

This sequence belongs to the RuvC family. Homodimer which binds Holliday junction (HJ) DNA. The HJ becomes 2-fold symmetrical on binding to RuvC with unstacked arms; it has a different conformation from HJ DNA in complex with RuvA. In the full resolvosome a probable DNA-RuvA(4)-RuvB(12)-RuvC(2) complex forms which resolves the HJ. It depends on Mg(2+) as a cofactor.

The protein localises to the cytoplasm. It catalyses the reaction Endonucleolytic cleavage at a junction such as a reciprocal single-stranded crossover between two homologous DNA duplexes (Holliday junction).. The RuvA-RuvB-RuvC complex processes Holliday junction (HJ) DNA during genetic recombination and DNA repair. Endonuclease that resolves HJ intermediates. Cleaves cruciform DNA by making single-stranded nicks across the HJ at symmetrical positions within the homologous arms, yielding a 5'-phosphate and a 3'-hydroxyl group; requires a central core of homology in the junction. The consensus cleavage sequence is 5'-(A/T)TT(C/G)-3'. Cleavage occurs on the 3'-side of the TT dinucleotide at the point of strand exchange. HJ branch migration catalyzed by RuvA-RuvB allows RuvC to scan DNA until it finds its consensus sequence, where it cleaves and resolves the cruciform DNA. The chain is Crossover junction endodeoxyribonuclease RuvC from Paenarthrobacter aurescens (strain TC1).